A 161-amino-acid chain; its full sequence is Vasotocin-neurophysin VT (161 aa).

The first 19 residues, 1-19 (MAEPSLPLSFLCLLALSSA), serve as a signal peptide directing secretion. Cys-20 and Cys-25 form a disulfide bridge. At Gly-28 the chain carries Glycine amide. Intrachain disulfides connect Cys-41–Cys-85, Cys-44–Cys-58, Cys-52–Cys-75, Cys-59–Cys-65, Cys-92–Cys-104, Cys-98–Cys-116, and Cys-105–Cys-110.

It belongs to the vasopressin/oxytocin family. Seven disulfide bonds are present in neurophysin.

It localises to the secreted. In terms of biological role, vasotocin is an antidiuretic hormone. In Gallus gallus (Chicken), this protein is Vasotocin-neurophysin VT.